The chain runs to 467 residues: MNEIDKTPRQIVAELDKYVIGQDSAKRAIAVALRNRYRRIQLPKDMQEDISPKNLLMIGPTGVGKTEIARRLAKIVNAPFVKVEATKFTEVGYVGRDVESMARDLVEVAYRMEQNDAFKQVRAQAAQQANKRLVKLIVPAKKKQENPNQYLFNALRDLQSGSFPNMNGNDMEEVTEDVRNERLSVAEQLKRGLLENNEVTIQVDDPSTQFNNQSGMLGQMGIDLSSLSSMMPTKKVERTMTVAEAREILIKEESEKLVNSADLADAAIKRAENTGIIFIDEIDKIASKSQQNAGQVSREGVQRDILPIVEGSQISTKYGLVKTDHILFIGSGAFHESKPSDLIAELQGRFPIRVELEDLSVDDFVKILTEPNNALVKQYIAMIGTDNIDVTFTIEAIHRIAEVAYQLNHDTENIGARRLHTILEKLLEDLLFEGPDMQMGDIKITEAYVNDKIGSIVEDKDLSQYIL.

Residues Ile20, 62–67, Asp280, Glu345, and Arg417 contribute to the ATP site; that span reads GVGKTE.

The protein belongs to the ClpX chaperone family. HslU subfamily. A double ring-shaped homohexamer of HslV is capped on each side by a ring-shaped HslU homohexamer. The assembly of the HslU/HslV complex is dependent on binding of ATP.

The protein localises to the cytoplasm. In terms of biological role, ATPase subunit of a proteasome-like degradation complex; this subunit has chaperone activity. The binding of ATP and its subsequent hydrolysis by HslU are essential for unfolding of protein substrates subsequently hydrolyzed by HslV. HslU recognizes the N-terminal part of its protein substrates and unfolds these before they are guided to HslV for hydrolysis. This is ATP-dependent protease ATPase subunit HslU from Ligilactobacillus salivarius (strain UCC118) (Lactobacillus salivarius).